We begin with the raw amino-acid sequence, 560 residues long: Cilia- and flagella-associated protein 184 (560 aa).

Residues 1-12 (MEGGSEHTKDPG) show a composition bias toward basic and acidic residues. The disordered stretch occupies residues 1–209 (MEGGSEHTKD…QEEGKPLGGR (209 aa)). 2 stretches are compositionally biased toward acidic residues: residues 41 to 61 (GELE…EEEA) and 101 to 110 (EPEEPAEAGA). Basic and acidic residues-rich tracts occupy residues 127-144 (AEAR…KEVR) and 179-209 (ETRR…LGGR). 2 coiled-coil regions span residues 357–481 (QAAL…QGRD) and 510–536 (DSLL…LKRH).

It belongs to the CFAP184 family. In terms of assembly, forms a complex with CFAP263; the interaction is required for functional activity in cilia.

The protein localises to the cell projection. It is found in the cilium. Its subcellular location is the cytoplasm. It localises to the cytoskeleton. The protein resides in the microtubule organizing center. The protein localises to the centrosome. In complex with CFAP263, acts as a regulator of ciliary beating that connects radial spoke 3 (RS3) to the inner dynein arm (IDA) and the nexin-dynein regulatory complex (N-DRC). The complex is positioned parallel to N-DRC and forms a connection between the arch at the base of RS3, the IDA tail and N-DRC. The polypeptide is Cilia- and flagella-associated protein 184 (CFAP184) (Macaca fascicularis (Crab-eating macaque)).